The sequence spans 89 residues: Phytosulfokines 1 (89 aa).

The first 22 residues, 1–22 (MVNPGRTARALCLLCLALLLLG), serve as a signal peptide directing secretion. The propeptide occupies 23–79 (QDTHSRKLLLQEKHSHGVGNGTTTTQEPSRENGGSTGSNNNGQLQFDSAKWEEFHTD). Residues 33–70 (QEKHSHGVGNGTTTTQEPSRENGGSTGSNNNGQLQFDS) are disordered. Residue Asn42 is glycosylated (N-linked (GlcNAc...) asparagine). Sulfotyrosine is present on residues Tyr80 and Tyr82. The propeptide occupies 85 to 89 (DVKKP).

It belongs to the phytosulfokine family. In terms of processing, sulfation is important for activity and for the binding to a putative membrane receptor. PSK-alpha is produced by endopeptidase digestion. PSK-beta is produced from PSK-alpha by exopeptidase digestion. Expressed throughout the seedling. More abundant in fragments containing shoot or root apexes where cells proliferate vigorously.

The protein localises to the secreted. In terms of biological role, promotes plant cell differentiation, organogenesis and somatic embryogenesis as well as cell proliferation. This Oryza sativa subsp. japonica (Rice) protein is Phytosulfokines 1 (PSK1).